The chain runs to 469 residues: 3-isopropylmalate dehydratase large subunit (469 aa).

Cys347, Cys410, and Cys413 together coordinate [4Fe-4S] cluster.

The protein belongs to the aconitase/IPM isomerase family. LeuC type 1 subfamily. Heterodimer of LeuC and LeuD. The cofactor is [4Fe-4S] cluster.

It carries out the reaction (2R,3S)-3-isopropylmalate = (2S)-2-isopropylmalate. Its pathway is amino-acid biosynthesis; L-leucine biosynthesis; L-leucine from 3-methyl-2-oxobutanoate: step 2/4. Its function is as follows. Catalyzes the isomerization between 2-isopropylmalate and 3-isopropylmalate, via the formation of 2-isopropylmaleate. This is 3-isopropylmalate dehydratase large subunit from Burkholderia orbicola (strain MC0-3).